Here is a 335-residue protein sequence, read N- to C-terminus: POU domain, class 5, transcription factor 2 (335 aa).

The interval 1 to 23 is disordered; the sequence is MAGRRSSNVCPFPGNSGGGLEGP. Residues 113–187 form the POU-specific domain; it reads DVSAIQKEME…LLKMWLEEVD (75 aa). A DNA-binding region (homeobox) is located at residues 205–264; the sequence is RKRRRASRERRIGSNLEKLFLQCPEPTPQQISYIAGRLRLQKDLVQVWFSNRSQMAGWPT.

The protein belongs to the POU transcription factor family. Class-5 subfamily. As to expression, highly restricted to adult testis.

The protein localises to the nucleus. Functionally, transcription factor that binds preferentially to the octamer motif (5'-ATGTTAAT-3'). May exert a regulatory function in meiotic events that are required for terminal differentiation of male germ cell. This Rattus norvegicus (Rat) protein is POU domain, class 5, transcription factor 2 (Pou5f2).